The following is a 1167-amino-acid chain: Carbamoyl phosphate synthase large chain (1167 aa).

The carboxyphosphate synthetic domain stretch occupies residues 1 to 455 (MPRRTDIKSI…SLQKALRGLE (455 aa)). ATP is bound by residues R129, R221, G227, G228, E260, V262, E267, G293, V294, H295, Q337, and E351. One can recognise an ATP-grasp 1 domain in the interval 184–380 (LETRWNLGEG…IAKIAAKLAV (197 aa)). Mg(2+) is bound by residues Q337, E351, and N353. The Mn(2+) site is built by Q337, E351, and N353. Residues 456–619 (TGLTGLDEIE…PFAGALANEA (164 aa)) form an oligomerization domain region. The interval 620-1031 (QVSSRKKVVI…AFAKSQLGAG (412 aa)) is carbamoyl phosphate synthetic domain. One can recognise an ATP-grasp 2 domain in the interval 748–960 (QKLLHKLGLS…IAKIAARIMA (213 aa)). The ATP site is built by R784, T844, L846, E851, G876, I877, H878, S879, Q919, and E931. Residues Q919, E931, and N933 each contribute to the Mg(2+) site. Mn(2+)-binding residues include Q919, E931, and N933. The 136-residue stretch at 1032-1167 (VDLPRSGTLF…EVRPLQEYFA (136 aa)) folds into the MGS-like domain. Positions 1032–1167 (VDLPRSGTLF…EVRPLQEYFA (136 aa)) are allosteric domain.

It belongs to the CarB family. As to quaternary structure, composed of two chains; the small (or glutamine) chain promotes the hydrolysis of glutamine to ammonia, which is used by the large (or ammonia) chain to synthesize carbamoyl phosphate. Tetramer of heterodimers (alpha,beta)4. It depends on Mg(2+) as a cofactor. Mn(2+) serves as cofactor.

The catalysed reaction is hydrogencarbonate + L-glutamine + 2 ATP + H2O = carbamoyl phosphate + L-glutamate + 2 ADP + phosphate + 2 H(+). It catalyses the reaction hydrogencarbonate + NH4(+) + 2 ATP = carbamoyl phosphate + 2 ADP + phosphate + 2 H(+). It functions in the pathway amino-acid biosynthesis; L-arginine biosynthesis; carbamoyl phosphate from bicarbonate: step 1/1. The protein operates within pyrimidine metabolism; UMP biosynthesis via de novo pathway; (S)-dihydroorotate from bicarbonate: step 1/3. Its function is as follows. Large subunit of the glutamine-dependent carbamoyl phosphate synthetase (CPSase). CPSase catalyzes the formation of carbamoyl phosphate from the ammonia moiety of glutamine, carbonate, and phosphate donated by ATP, constituting the first step of 2 biosynthetic pathways, one leading to arginine and/or urea and the other to pyrimidine nucleotides. The large subunit (synthetase) binds the substrates ammonia (free or transferred from glutamine from the small subunit), hydrogencarbonate and ATP and carries out an ATP-coupled ligase reaction, activating hydrogencarbonate by forming carboxy phosphate which reacts with ammonia to form carbamoyl phosphate. In Mesorhizobium japonicum (strain LMG 29417 / CECT 9101 / MAFF 303099) (Mesorhizobium loti (strain MAFF 303099)), this protein is Carbamoyl phosphate synthase large chain.